Here is a 620-residue protein sequence, read N- to C-terminus: MALLQIAEPGLSPQPHQRRLAVGIDLGTTNSLVAAVRSGLSEPLADAEGQVILPSAVRYHADRVEVGQSAKIAASQDPFNTVLSVKRLMGRGLTDVKQLGEQLPYRFVGGESHMPFIDTVQGPKSPVEVSADILKVLRQRAEASLGGELVGAVITVPAYFDDAQRQATKDAARLAGLNVLRLLNEPTAAAVAYGLDQKAEGVVAIYDLGGGTFDISILRLTGGVFEVLATGGDTALGGDDFDHAIASWIVTDAGLSADIDPSAQRSLLQAACSAKEALTDAESVEVVYGEWRGTLTREALNALIEPMVARSLKACRRAVRDTGIELEEVEAVVMVGGSTRVPRVREAVAELFGRQPLTEIDPDQVVAIGAAIQADTLAGNKRDGGELLLLDVIPLSLGLETMGGLMEKVIPRNTTIPVARGQEFTTYKDGQTAMKIHVLQGERELISDCRSLARFELRGIPPMVAGAAKIRVTFQVDADGLLSVSAREMGSGIESSIQVKPSYGLTDDEVTRMLKDSFEYAGDDKVARVLREHQVDAERLLEAVQGALDADGERLLDEEERLVINLQMDELRELMQGTDGYAIEQQTKRLSQVTDAFAARRLDSTVKAALAGRNLNEIEE.

The protein belongs to the heat shock protein 70 family.

Its function is as follows. Chaperone involved in the maturation of iron-sulfur cluster-containing proteins. Has a low intrinsic ATPase activity which is markedly stimulated by HscB. The polypeptide is Chaperone protein HscA homolog (Pseudomonas syringae pv. syringae (strain B728a)).